A 364-amino-acid chain; its full sequence is tRNA 2-selenouridine synthase (364 aa).

A Rhodanese domain is found at 12–135 (FLNDRPMMDT…MRTFLLDTTE (124 aa)). The active-site S-selanylcysteine intermediate is Cys-95.

This sequence belongs to the SelU family. In terms of assembly, monomer.

It carries out the reaction 5-methylaminomethyl-2-thiouridine(34) in tRNA + selenophosphate + (2E)-geranyl diphosphate + H2O + H(+) = 5-methylaminomethyl-2-selenouridine(34) in tRNA + (2E)-thiogeraniol + phosphate + diphosphate. The catalysed reaction is 5-methylaminomethyl-2-thiouridine(34) in tRNA + (2E)-geranyl diphosphate = 5-methylaminomethyl-S-(2E)-geranyl-thiouridine(34) in tRNA + diphosphate. It catalyses the reaction 5-methylaminomethyl-S-(2E)-geranyl-thiouridine(34) in tRNA + selenophosphate + H(+) = 5-methylaminomethyl-2-(Se-phospho)selenouridine(34) in tRNA + (2E)-thiogeraniol. The enzyme catalyses 5-methylaminomethyl-2-(Se-phospho)selenouridine(34) in tRNA + H2O = 5-methylaminomethyl-2-selenouridine(34) in tRNA + phosphate. Its function is as follows. Involved in the post-transcriptional modification of the uridine at the wobble position (U34) of tRNA(Lys), tRNA(Glu) and tRNA(Gln). Catalyzes the conversion of 2-thiouridine (S2U-RNA) to 2-selenouridine (Se2U-RNA). Acts in a two-step process involving geranylation of 2-thiouridine (S2U) to S-geranyl-2-thiouridine (geS2U) and subsequent selenation of the latter derivative to 2-selenouridine (Se2U) in the tRNA chain. The chain is tRNA 2-selenouridine synthase from Pseudomonas fluorescens (strain ATCC BAA-477 / NRRL B-23932 / Pf-5).